The sequence spans 70 residues: uncharacterized protein (70 aa).

The segment at 21 to 43 (YECPICGEIYIKRKSMITHLRKH) adopts a C2H2-type zinc-finger fold.

This is an uncharacterized protein from Saccharolobus islandicus (Sulfolobus islandicus).